Consider the following 126-residue polypeptide: Phosphoribosyl-AMP cyclohydrolase (126 aa).

Asp77 serves as a coordination point for Mg(2+). Cys78 contacts Zn(2+). Positions 79 and 81 each coordinate Mg(2+). Positions 95 and 102 each coordinate Zn(2+).

Belongs to the PRA-CH family. Homodimer. Requires Mg(2+) as cofactor. It depends on Zn(2+) as a cofactor.

It localises to the cytoplasm. It carries out the reaction 1-(5-phospho-beta-D-ribosyl)-5'-AMP + H2O = 1-(5-phospho-beta-D-ribosyl)-5-[(5-phospho-beta-D-ribosylamino)methylideneamino]imidazole-4-carboxamide. It functions in the pathway amino-acid biosynthesis; L-histidine biosynthesis; L-histidine from 5-phospho-alpha-D-ribose 1-diphosphate: step 3/9. Catalyzes the hydrolysis of the adenine ring of phosphoribosyl-AMP. This Cellvibrio japonicus (strain Ueda107) (Pseudomonas fluorescens subsp. cellulosa) protein is Phosphoribosyl-AMP cyclohydrolase.